The sequence spans 531 residues: O-phosphoserine--tRNA(Cys) ligase (531 aa).

Substrate is bound by residues 189–191 (HMT), 234–236 (SAS), 276–277 (YY), and Asn319.

The protein belongs to the class-II aminoacyl-tRNA synthetase family. O-phosphoseryl-tRNA(Cys) synthetase subfamily. As to quaternary structure, homotetramer. Interacts with SepCysS.

It catalyses the reaction tRNA(Cys) + O-phospho-L-serine + ATP = O-phospho-L-seryl-tRNA(Cys) + AMP + diphosphate. Functionally, catalyzes the attachment of O-phosphoserine (Sep) to tRNA(Cys). The sequence is that of O-phosphoserine--tRNA(Cys) ligase from Methanospirillum hungatei JF-1 (strain ATCC 27890 / DSM 864 / NBRC 100397 / JF-1).